We begin with the raw amino-acid sequence, 65 residues long: Large ribosomal subunit protein bL35 (65 aa).

This sequence belongs to the bacterial ribosomal protein bL35 family.

The chain is Large ribosomal subunit protein bL35 from Synechococcus sp. (strain WH7803).